Consider the following 223-residue polypeptide: Ribosome maturation factor RimM (223 aa).

Residues methionine 1 to proline 12 show a composition bias toward low complexity. Disordered stretches follow at residues methionine 1–leucine 44 and valine 203–glycine 223. One can recognise a PRC barrel domain in the interval aspartate 135–leucine 210.

The protein belongs to the RimM family. As to quaternary structure, binds ribosomal protein uS19.

It is found in the cytoplasm. Functionally, an accessory protein needed during the final step in the assembly of 30S ribosomal subunit, possibly for assembly of the head region. Essential for efficient processing of 16S rRNA. May be needed both before and after RbfA during the maturation of 16S rRNA. It has affinity for free ribosomal 30S subunits but not for 70S ribosomes. The chain is Ribosome maturation factor RimM from Methylorubrum extorquens (strain CM4 / NCIMB 13688) (Methylobacterium extorquens).